The following is a 215-amino-acid chain: tRNA (guanine-N(7)-)-methyltransferase (215 aa).

Residues Asp43, Glu68, Asn95, and Asp121 each contribute to the S-adenosyl-L-methionine site. Residue Asp121 is part of the active site. Lys125 and Asp157 together coordinate substrate.

The protein belongs to the class I-like SAM-binding methyltransferase superfamily. TrmB family.

The catalysed reaction is guanosine(46) in tRNA + S-adenosyl-L-methionine = N(7)-methylguanosine(46) in tRNA + S-adenosyl-L-homocysteine. It functions in the pathway tRNA modification; N(7)-methylguanine-tRNA biosynthesis. Catalyzes the formation of N(7)-methylguanine at position 46 (m7G46) in tRNA. The protein is tRNA (guanine-N(7)-)-methyltransferase of Trichormus variabilis (strain ATCC 29413 / PCC 7937) (Anabaena variabilis).